The chain runs to 319 residues: Malate dehydrogenase (319 aa).

Residues 10-15 (GAGQIG) and Asp34 each bind NAD(+). 2 residues coordinate substrate: Arg85 and Arg91. NAD(+)-binding positions include Asn98 and 121 to 123 (ITN). Residues Asn123 and Arg154 each coordinate substrate. The Proton acceptor role is filled by His178.

It belongs to the LDH/MDH superfamily. MDH type 3 family.

The enzyme catalyses (S)-malate + NAD(+) = oxaloacetate + NADH + H(+). In terms of biological role, catalyzes the reversible oxidation of malate to oxaloacetate. The polypeptide is Malate dehydrogenase (Rhodospirillum centenum (strain ATCC 51521 / SW)).